Reading from the N-terminus, the 170-residue chain is Urease accessory protein UreE (170 aa).

It belongs to the UreE family.

It localises to the cytoplasm. In terms of biological role, involved in urease metallocenter assembly. Binds nickel. Probably functions as a nickel donor during metallocenter assembly. This Helicobacter pylori (strain P12) protein is Urease accessory protein UreE.